Consider the following 215-residue polypeptide: Jasmonate monooxygenase ABM (215 aa).

Residues 2–90 form the ABM domain; that stretch reads FAVIFETRPQ…GVLEDYHLRV (89 aa).

It is found in the endoplasmic reticulum. The protein resides in the secreted. The catalysed reaction is jasmonate + NADPH + O2 + H(+) = (1R,2R)-12-hydroxyjasmonate + NADP(+) + H2O. Functionally, monooxygenase that converts the endogenous (and likely the host) jasmonate (JA) to its hydroxylated derivative 12-hydroxyjasmonate (12OH-JA), also known as tuberonic acid, a compound that attenuates or disables jasmonate-based host innate immunity and which is essential for proper initiation and elaboration of the blast disease in rice. ABM, together with a polyketide synthase MGG_04775 and the esterase MGG_04774, share the secondary metabolism gene cluster with ABC transporter ABC3, and therefore may also be involved in the synthesis of other important metabolites such as the ABC3 transporter efflux substrate (ATS) and/or additional polyketides. This chain is Jasmonate monooxygenase ABM, found in Pyricularia oryzae (strain 70-15 / ATCC MYA-4617 / FGSC 8958) (Rice blast fungus).